The primary structure comprises 311 residues: tRNA-cytidine(32) 2-sulfurtransferase (311 aa).

The short motif at serine 45–serine 50 is the PP-loop motif element. Residues cysteine 120, cysteine 123, and cysteine 211 each contribute to the [4Fe-4S] cluster site.

This sequence belongs to the TtcA family. As to quaternary structure, homodimer. Requires Mg(2+) as cofactor. It depends on [4Fe-4S] cluster as a cofactor.

It is found in the cytoplasm. The catalysed reaction is cytidine(32) in tRNA + S-sulfanyl-L-cysteinyl-[cysteine desulfurase] + AH2 + ATP = 2-thiocytidine(32) in tRNA + L-cysteinyl-[cysteine desulfurase] + A + AMP + diphosphate + H(+). It participates in tRNA modification. In terms of biological role, catalyzes the ATP-dependent 2-thiolation of cytidine in position 32 of tRNA, to form 2-thiocytidine (s(2)C32). The sulfur atoms are provided by the cysteine/cysteine desulfurase (IscS) system. This chain is tRNA-cytidine(32) 2-sulfurtransferase, found in Shewanella halifaxensis (strain HAW-EB4).